Reading from the N-terminus, the 100-residue chain is Urease subunit gamma (100 aa).

It belongs to the urease gamma subunit family. Heterotrimer of UreA (gamma), UreB (beta) and UreC (alpha) subunits. Three heterotrimers associate to form the active enzyme.

It is found in the cytoplasm. The catalysed reaction is urea + 2 H2O + H(+) = hydrogencarbonate + 2 NH4(+). Its pathway is nitrogen metabolism; urea degradation; CO(2) and NH(3) from urea (urease route): step 1/1. The sequence is that of Urease subunit gamma from Haemophilus influenzae (strain ATCC 51907 / DSM 11121 / KW20 / Rd).